The chain runs to 350 residues: Ribosomal RNA large subunit methyltransferase M (350 aa).

Residues 217-220, D236, D256, and D272 contribute to the S-adenosyl-L-methionine site; that span reads APGG. Residue K301 is the Proton acceptor of the active site.

The protein belongs to the class I-like SAM-binding methyltransferase superfamily. RNA methyltransferase RlmE family. RlmM subfamily. In terms of assembly, monomer.

It is found in the cytoplasm. It carries out the reaction cytidine(2498) in 23S rRNA + S-adenosyl-L-methionine = 2'-O-methylcytidine(2498) in 23S rRNA + S-adenosyl-L-homocysteine + H(+). Its function is as follows. Catalyzes the 2'-O-methylation at nucleotide C2498 in 23S rRNA. This chain is Ribosomal RNA large subunit methyltransferase M, found in Teredinibacter turnerae (strain ATCC 39867 / T7901).